Consider the following 417-residue polypeptide: Serine hydroxymethyltransferase 4 (417 aa).

(6S)-5,6,7,8-tetrahydrofolate is bound by residues Leu-121 and 125-127 (GHL). Lys-230 is subject to N6-(pyridoxal phosphate)lysine. A (6S)-5,6,7,8-tetrahydrofolate-binding site is contributed by 355-357 (SPF).

The protein belongs to the SHMT family. As to quaternary structure, homodimer. Pyridoxal 5'-phosphate serves as cofactor.

The protein localises to the cytoplasm. It carries out the reaction (6R)-5,10-methylene-5,6,7,8-tetrahydrofolate + glycine + H2O = (6S)-5,6,7,8-tetrahydrofolate + L-serine. The protein operates within one-carbon metabolism; tetrahydrofolate interconversion. It functions in the pathway amino-acid biosynthesis; glycine biosynthesis; glycine from L-serine: step 1/1. Functionally, catalyzes the reversible interconversion of serine and glycine with tetrahydrofolate (THF) serving as the one-carbon carrier. This reaction serves as the major source of one-carbon groups required for the biosynthesis of purines, thymidylate, methionine, and other important biomolecules. Also exhibits THF-independent aldolase activity toward beta-hydroxyamino acids, producing glycine and aldehydes, via a retro-aldol mechanism. In Colwellia psychrerythraea (strain 34H / ATCC BAA-681) (Vibrio psychroerythus), this protein is Serine hydroxymethyltransferase 4.